The primary structure comprises 254 residues: Proteasome activator complex subunit 3 (254 aa).

Ala-2 bears the N-acetylalanine mark. Phosphoserine occurs at positions 17 and 24. N6-acetyllysine; by P300/CBP is present on Lys-195. Ser-247 is subject to Phosphoserine; by CHEK2.

The protein belongs to the PA28 family. Homoheptamer; the stability of the heptamer is essential for the specific activation of the trypsine-like subunit and inhibition of the chymotrypsin-like and postglutamyl-preferring (PGPH) subunits of the proteasome. Interacts with p53/TP53 and MDM2. Interacts with MAP3K3. Associates with the proteasome. Interacts with CCAR2. Interacts with PSME3IP1 (via C-terminus); the interaction is direct and promotes the association of PSME3 with the 20S proteasome. Interacts with COIL; the interaction is inhibited by PSME3IP1. In terms of assembly, (Microbial infection) Interacts with human cytomegalovirus UL27. Phosphorylated by MAP3K3. Phosphorylation at Ser-247 promotes its association with CCAR2. In terms of processing, acetylation at the major site Lys-195 is important for oligomerization and ability to degrade its target substrates. Deacetylated by SIRT1.

Its subcellular location is the nucleus. It localises to the cytoplasm. Its function is as follows. Subunit of the 11S REG-gamma (also called PA28-gamma) proteasome regulator, a doughnut-shaped homoheptamer which associates with the proteasome. 11S REG-gamma activates the trypsin-like catalytic subunit of the proteasome but inhibits the chymotrypsin-like and postglutamyl-preferring (PGPH) subunits. Facilitates the MDM2-p53/TP53 interaction which promotes ubiquitination- and MDM2-dependent proteasomal degradation of p53/TP53, limiting its accumulation and resulting in inhibited apoptosis after DNA damage. May also be involved in cell cycle regulation. Mediates CCAR2 and CHEK2-dependent SIRT1 inhibition. The polypeptide is Proteasome activator complex subunit 3 (PSME3) (Homo sapiens (Human)).